Consider the following 346-residue polypeptide: Selenide, water dikinase (346 aa).

C15 is an active-site residue. ATP-binding positions include K18 and 46 to 48 (SKD). Position 49 (D49) interacts with Mg(2+). Residues D66, D89, and 137–139 (GHS) each bind ATP. Residue D89 coordinates Mg(2+). D225 lines the Mg(2+) pocket.

This sequence belongs to the selenophosphate synthase 1 family. Class I subfamily. Homodimer. Requires Mg(2+) as cofactor.

The catalysed reaction is hydrogenselenide + ATP + H2O = selenophosphate + AMP + phosphate + 2 H(+). Functionally, synthesizes selenophosphate from selenide and ATP. In Photobacterium profundum (strain SS9), this protein is Selenide, water dikinase.